Consider the following 356-residue polypeptide: UDP-N-acetylglucosamine--N-acetylmuramyl-(pentapeptide) pyrophosphoryl-undecaprenol N-acetylglucosamine transferase (356 aa).

UDP-N-acetyl-alpha-D-glucosamine-binding residues include serine 198 and glutamine 289.

This sequence belongs to the glycosyltransferase 28 family. MurG subfamily.

It localises to the cell membrane. The catalysed reaction is Mur2Ac(oyl-L-Ala-gamma-D-Glu-L-Lys-D-Ala-D-Ala)-di-trans,octa-cis-undecaprenyl diphosphate + UDP-N-acetyl-alpha-D-glucosamine = beta-D-GlcNAc-(1-&gt;4)-Mur2Ac(oyl-L-Ala-gamma-D-Glu-L-Lys-D-Ala-D-Ala)-di-trans,octa-cis-undecaprenyl diphosphate + UDP + H(+). It functions in the pathway cell wall biogenesis; peptidoglycan biosynthesis. Functionally, cell wall formation. Catalyzes the transfer of a GlcNAc subunit on undecaprenyl-pyrophosphoryl-MurNAc-pentapeptide (lipid intermediate I) to form undecaprenyl-pyrophosphoryl-MurNAc-(pentapeptide)GlcNAc (lipid intermediate II). The chain is UDP-N-acetylglucosamine--N-acetylmuramyl-(pentapeptide) pyrophosphoryl-undecaprenol N-acetylglucosamine transferase from Streptococcus thermophilus (strain ATCC BAA-491 / LMD-9).